The following is a 1264-amino-acid chain: BRCA2-interacting transcriptional repressor EMSY (1264 aa).

Residues 1 to 442 (MPVVWPTLLD…LPKPVTATLP (442 aa)) form an interaction with BRCA2 region. The 99-residue stretch at 16 to 114 (CKRILRKLEL…EWSIEGRRLV (99 aa)) folds into the ENT domain. The interval 118–122 (PRLVP) is interaction with ZMYND11. Residues 145–179 (PVPAETASKDGVSCSDEDEKPRKRRRTNSSSSSPV) are disordered. Residue Thr171 is modified to Phosphothreonine. Ser173 and Ser177 each carry phosphoserine. 2 O-linked (GlcNAc) serine glycosylation sites follow: Ser192 and Ser200. Ser202 carries the post-translational modification Phosphoserine. Thr235 is a glycosylation site (O-linked (GlcNAc) threonine). Residues 364–406 (FPKQHQQSPKQQLQQVQQQTQQPVAQPSSVSQQQQPQQSALPP) are compositionally biased toward low complexity. Positions 364-407 (FPKQHQQSPKQQLQQVQQQTQQPVAQPSSVSQQQQPQQSALPPG) are disordered. O-linked (GlcNAc) threonine glycosylation is found at Thr465 and Thr470. Ser521 carries an O-linked (GlcNAc) serine glycan. Residues 660 to 671 (SRVADASNSSAQ) show a composition bias toward polar residues. A disordered region spans residues 660 to 700 (SRVADASNSSAQEGKEEPQGYTDSSSSSTESSQSSQDSQPV). Low complexity predominate over residues 681 to 698 (TDSSSSSTESSQSSQDSQ). Residues Ser782 and Ser785 each carry the phosphoserine modification. Thr1069 is a glycosylation site (O-linked (GlcNAc) threonine). A Phosphoserine modification is found at Ser1085. A disordered region spans residues 1232 to 1264 (QLDDDETAMEQDIDSSTEDGTEPSPSQSAVERS). Over residues 1233 to 1252 (LDDDETAMEQDIDSSTEDGT) the composition is skewed to acidic residues. The span at 1254-1264 (PSPSQSAVERS) shows a compositional bias: polar residues.

As to quaternary structure, homodimer. Interacts with the transactivation domain of BRCA2. Interacts with CBX1 (via chromoshadow domain). Interacts with ZMYND11. Does not interact with CBX3 or CBX5. Component of a nuclear receptor-mediated transcription complex composed of at least ZNF335, CCAR2 and EMSY; the complex stimulates the transcription of nuclear receptor target genes such as SOX9 and HOXA1. Within the complex interacts with CCAR2 and ZNF335. Components of this complex may associate with components of a histone methylation complex to form a complex at least composed of ZNF335, HCFC1, CCAR2, EMSY, MKI67, RBBP5, ASH2L and WDR5. Within this complex, interacts with ASH2L and RBBP5.

Its subcellular location is the nucleus. In terms of biological role, regulator which is able to repress transcription, possibly via its interaction with a multiprotein chromatin remodeling complex that modifies the chromatin. Its interaction with BRCA2 suggests that it may play a central role in the DNA repair function of BRCA2. Mediates ligand-dependent transcriptional activation by nuclear hormone receptors. The protein is BRCA2-interacting transcriptional repressor EMSY of Mus musculus (Mouse).